The sequence spans 110 residues: Mobility group protein 1B (110 aa).

A DNA-binding region (HMG box) is located at residues Pro-5–Glu-71. Positions Glu-71 to Gly-81 are enriched in basic and acidic residues. A disordered region spans residues Glu-71 to Glu-110. Residues Lys-82–Gly-100 show a composition bias toward basic residues.

The protein belongs to the HMGB family.

Its subcellular location is the nucleus. It localises to the chromosome. Functionally, found in condensed chromomeres. Binds preferentially to AT-rich DNA. In Chironomus tentans (Midge), this protein is Mobility group protein 1B (HMG1B).